The following is an 892-amino-acid chain: Protein translocase subunit SecA (892 aa).

ATP is bound by residues Q89, 107 to 111 (GEGKT), and D517. C879, C881, C890, and H891 together coordinate Zn(2+).

Belongs to the SecA family. As to quaternary structure, monomer and homodimer. Part of the essential Sec protein translocation apparatus which comprises SecA, SecYEG and auxiliary proteins SecDF-YajC and YidC. Zn(2+) is required as a cofactor.

It is found in the cell inner membrane. It localises to the cytoplasm. It carries out the reaction ATP + H2O + cellular proteinSide 1 = ADP + phosphate + cellular proteinSide 2.. Part of the Sec protein translocase complex. Interacts with the SecYEG preprotein conducting channel. Has a central role in coupling the hydrolysis of ATP to the transfer of proteins into and across the cell membrane, serving as an ATP-driven molecular motor driving the stepwise translocation of polypeptide chains across the membrane. This is Protein translocase subunit SecA from Ruthia magnifica subsp. Calyptogena magnifica.